A 534-amino-acid chain; its full sequence is Bifunctional pantoate ligase/cytidylate kinase (534 aa).

The tract at residues 1–302 (MRLLTTVAAL…LGSTRLIDNT (302 aa)) is pantoate--beta-alanine ligase. 48-55 (MGSLHQGH) lines the ATP pocket. His-55 serves as the catalytic Proton donor. (R)-pantoate is bound at residue Gln-79. Gln-79 lines the beta-alanine pocket. An ATP-binding site is contributed by 172–175 (GQKD). Residue Gln-178 coordinates (R)-pantoate. ATP-binding positions include Val-201 and 209 to 212 (CSSR). Residues 303 to 534 (ILRDRQPIIA…DYYQQRLSQW (232 aa)) form a cytidylate kinase region.

It in the N-terminal section; belongs to the pantothenate synthetase family. The protein in the C-terminal section; belongs to the cytidylate kinase family. Type 1 subfamily.

It is found in the cytoplasm. It carries out the reaction (R)-pantoate + beta-alanine + ATP = (R)-pantothenate + AMP + diphosphate + H(+). It catalyses the reaction CMP + ATP = CDP + ADP. The enzyme catalyses dCMP + ATP = dCDP + ADP. It functions in the pathway cofactor biosynthesis; (R)-pantothenate biosynthesis; (R)-pantothenate from (R)-pantoate and beta-alanine: step 1/1. Catalyzes the condensation of pantoate with beta-alanine in an ATP-dependent reaction via a pantoyl-adenylate intermediate. Its function is as follows. Catalyzes the transfer of a phosphate group from ATP to either CMP or dCMP to form CDP or dCDP and ADP, respectively. The sequence is that of Bifunctional pantoate ligase/cytidylate kinase from Trichormus variabilis (strain ATCC 29413 / PCC 7937) (Anabaena variabilis).